The chain runs to 237 residues: 2-C-methyl-D-erythritol 4-phosphate cytidylyltransferase (237 aa).

The protein belongs to the IspD/TarI cytidylyltransferase family. IspD subfamily.

The catalysed reaction is 2-C-methyl-D-erythritol 4-phosphate + CTP + H(+) = 4-CDP-2-C-methyl-D-erythritol + diphosphate. Its pathway is isoprenoid biosynthesis; isopentenyl diphosphate biosynthesis via DXP pathway; isopentenyl diphosphate from 1-deoxy-D-xylulose 5-phosphate: step 2/6. Its function is as follows. Catalyzes the formation of 4-diphosphocytidyl-2-C-methyl-D-erythritol from CTP and 2-C-methyl-D-erythritol 4-phosphate (MEP). This chain is 2-C-methyl-D-erythritol 4-phosphate cytidylyltransferase, found in Clostridioides difficile (strain 630) (Peptoclostridium difficile).